Consider the following 311-residue polypeptide: Cytosolic Fe-S cluster assembly factor Nubp1 homolog (311 aa).

Positions 9, 23, 26, and 32 each coordinate [4Fe-4S] cluster. 63-70 is a binding site for ATP; that stretch reads GKGGVGKS. Positions 240 and 243 each coordinate [4Fe-4S] cluster.

Belongs to the Mrp/NBP35 ATP-binding proteins family. NUBP1/NBP35 subfamily. In terms of assembly, heterotetramer of 2 Nubp1 and 2 Nubp2 chains. Requires [4Fe-4S] cluster as cofactor.

The protein localises to the cytoplasm. Functionally, component of the cytosolic iron-sulfur (Fe/S) protein assembly (CIA) machinery. Required for maturation of extramitochondrial Fe-S proteins. The Nubp1-Nubp2 heterotetramer forms a Fe-S scaffold complex, mediating the de novo assembly of an Fe-S cluster and its transfer to target apoproteins. The sequence is that of Cytosolic Fe-S cluster assembly factor Nubp1 homolog from Drosophila yakuba (Fruit fly).